A 283-amino-acid chain; its full sequence is Pantothenate synthetase (283 aa).

Position 34–41 (34–41) interacts with ATP; sequence MGALHDGH. The Proton donor role is filled by His-41. Gln-65 is a binding site for (R)-pantoate. Gln-65 lines the beta-alanine pocket. 152 to 155 provides a ligand contact to ATP; sequence GSKD. Gln-158 provides a ligand contact to (R)-pantoate. Residues Ile-181 and 189–192 each bind ATP; that span reads MSSR.

Belongs to the pantothenate synthetase family. As to quaternary structure, homodimer.

It is found in the cytoplasm. It carries out the reaction (R)-pantoate + beta-alanine + ATP = (R)-pantothenate + AMP + diphosphate + H(+). It participates in cofactor biosynthesis; (R)-pantothenate biosynthesis; (R)-pantothenate from (R)-pantoate and beta-alanine: step 1/1. In terms of biological role, catalyzes the condensation of pantoate with beta-alanine in an ATP-dependent reaction via a pantoyl-adenylate intermediate. The protein is Pantothenate synthetase of Rhodopseudomonas palustris (strain HaA2).